A 149-amino-acid polypeptide reads, in one-letter code: Tetracenomycin polyketide synthase protein TcmJ (149 aa).

The Cupin type-2 domain occupies 51–117 (HIELAPGESV…NRGNVPARVV (67 aa)). A disordered region spans residues 127 to 149 (PELGHVDTEPVPNPAAAPPKVGG).

As to quaternary structure, the tetracenomycin polyketide synthase (TCM PKS) is composed of a ketosynthase complex (TcmKL), an acyl carrier protein (TcmM), a cyclase (TcmN) and a probable second cyclase (TcmJ).

It carries out the reaction 10 malonyl-CoA + 8 H(+) = tetracenomycin F2 + 10 CO2 + 10 CoA + 2 H2O. Its pathway is antibiotic biosynthesis; tetracenomycin C biosynthesis. Functionally, involved in the biosynthesis of tetracenomycin C (TCM C). Part of a type II polyketide synthase (PKS) that catalyzes the synthesis of tetracenomycin F2 (TCM F2), a precursor of TCM C, from malonyl-CoA. TcmJ, while not absolutely required, greatly increases the tetracenomycin F2 production. It probably acts as a cyclase. The polypeptide is Tetracenomycin polyketide synthase protein TcmJ (Streptomyces glaucescens).